A 403-amino-acid chain; its full sequence is S-adenosylmethionine synthase (403 aa).

Histidine 17 provides a ligand contact to ATP. Aspartate 19 is a binding site for Mg(2+). Glutamate 45 provides a ligand contact to K(+). Glutamate 58 and glutamine 101 together coordinate L-methionine. Positions 101–111 (QSPDIAMGVDR) are flexible loop. ATP contacts are provided by residues 177-179 (DGK), 244-245 (RF), aspartate 253, 259-260 (RK), alanine 276, and lysine 280. Aspartate 253 is a binding site for L-methionine. Position 284 (lysine 284) interacts with L-methionine.

Belongs to the AdoMet synthase family. As to quaternary structure, homotetramer; dimer of dimers. The cofactor is Mg(2+). It depends on K(+) as a cofactor.

It localises to the cytoplasm. It catalyses the reaction L-methionine + ATP + H2O = S-adenosyl-L-methionine + phosphate + diphosphate. It participates in amino-acid biosynthesis; S-adenosyl-L-methionine biosynthesis; S-adenosyl-L-methionine from L-methionine: step 1/1. In terms of biological role, catalyzes the formation of S-adenosylmethionine (AdoMet) from methionine and ATP. The overall synthetic reaction is composed of two sequential steps, AdoMet formation and the subsequent tripolyphosphate hydrolysis which occurs prior to release of AdoMet from the enzyme. The polypeptide is S-adenosylmethionine synthase (Geobacillus kaustophilus (strain HTA426)).